A 100-amino-acid polypeptide reads, in one-letter code: NADH-quinone oxidoreductase subunit K (100 aa).

Transmembrane regions (helical) follow at residues Leu3 to Leu23, Ile29 to Phe49, and Ile60 to Leu80.

This sequence belongs to the complex I subunit 4L family. As to quaternary structure, NDH-1 is composed of 14 different subunits. Subunits NuoA, H, J, K, L, M, N constitute the membrane sector of the complex.

Its subcellular location is the cell inner membrane. The enzyme catalyses a quinone + NADH + 5 H(+)(in) = a quinol + NAD(+) + 4 H(+)(out). Its function is as follows. NDH-1 shuttles electrons from NADH, via FMN and iron-sulfur (Fe-S) centers, to quinones in the respiratory chain. The immediate electron acceptor for the enzyme in this species is believed to be ubiquinone. Couples the redox reaction to proton translocation (for every two electrons transferred, four hydrogen ions are translocated across the cytoplasmic membrane), and thus conserves the redox energy in a proton gradient. The sequence is that of NADH-quinone oxidoreductase subunit K from Magnetococcus marinus (strain ATCC BAA-1437 / JCM 17883 / MC-1).